The chain runs to 83 residues: Mu-theraphotoxin-Hhn2n (83 aa).

A signal peptide spans 1-21 (MKASMYLALAGLVLLFVVGYA). A propeptide spanning residues 22–48 (SESEEKEFPRELLSKIFAVDDFKGEER) is cleaved from the precursor. 3 cysteine pairs are disulfide-bonded: Cys-50-Cys-65, Cys-57-Cys-70, and Cys-64-Cys-77. Leucine amide is present on Leu-81.

This sequence belongs to the neurotoxin 10 (Hwtx-1) family. 15 (Hntx-3) subfamily. In terms of assembly, monomer. Expressed by the venom gland.

The protein resides in the secreted. Its function is as follows. Lethal neurotoxin. Selectively blocks tetrodotoxin-sensitive voltage-gated sodium channels (Nav). Does not affect tetrodotoxin-resistant voltage-gated sodium channels or calcium channels. The chain is Mu-theraphotoxin-Hhn2n from Cyriopagopus hainanus (Chinese bird spider).